We begin with the raw amino-acid sequence, 142 residues long: NTF2-related export protein 2 (142 aa).

The NTF2 domain occupies 17–136 (AAEEFVNIYY…WKIASDCFRF (120 aa)).

Associates with NXF1, NXF2, NXF3 and NXF5.

It is found in the nucleus. It localises to the cytoplasm. In terms of biological role, regulator of protein export for NES-containing proteins. Also plays a role in mRNA nuclear export. This Homo sapiens (Human) protein is NTF2-related export protein 2.